Consider the following 307-residue polypeptide: Transaldolase (307 aa).

Catalysis depends on Lys125, which acts as the Schiff-base intermediate with substrate.

The protein belongs to the transaldolase family. Type 1 subfamily.

The protein localises to the cytoplasm. The catalysed reaction is D-sedoheptulose 7-phosphate + D-glyceraldehyde 3-phosphate = D-erythrose 4-phosphate + beta-D-fructose 6-phosphate. It functions in the pathway carbohydrate degradation; pentose phosphate pathway; D-glyceraldehyde 3-phosphate and beta-D-fructose 6-phosphate from D-ribose 5-phosphate and D-xylulose 5-phosphate (non-oxidative stage): step 2/3. Functionally, transaldolase is important for the balance of metabolites in the pentose-phosphate pathway. This is Transaldolase from Pseudomonas aeruginosa (strain ATCC 15692 / DSM 22644 / CIP 104116 / JCM 14847 / LMG 12228 / 1C / PRS 101 / PAO1).